Reading from the N-terminus, the 103-residue chain is Large ribosomal subunit protein bL21 (103 aa).

It belongs to the bacterial ribosomal protein bL21 family. As to quaternary structure, part of the 50S ribosomal subunit. Contacts protein L20.

Its function is as follows. This protein binds to 23S rRNA in the presence of protein L20. This chain is Large ribosomal subunit protein bL21, found in Leptothrix cholodnii (strain ATCC 51168 / LMG 8142 / SP-6) (Leptothrix discophora (strain SP-6)).